Here is a 207-residue protein sequence, read N- to C-terminus: Holliday junction branch migration complex subunit RuvA (207 aa).

Positions 1-63 (MIGMLKGRVE…QDAITLFGFL (63 aa)) are domain I. Residues 64 to 142 (DARSKRMFLQ…VDKIETGEPT (79 aa)) form a domain II region. The interval 143-153 (STQRIPTDKGV) is flexible linker. Residues 153-207 (VEQVVEGLMSLGWKQADAQQAVDSVISSSGIALPLEEGNVPTVLRLALTSLDRGR) are domain III.

Belongs to the RuvA family. Homotetramer. Forms an RuvA(8)-RuvB(12)-Holliday junction (HJ) complex. HJ DNA is sandwiched between 2 RuvA tetramers; dsDNA enters through RuvA and exits via RuvB. An RuvB hexamer assembles on each DNA strand where it exits the tetramer. Each RuvB hexamer is contacted by two RuvA subunits (via domain III) on 2 adjacent RuvB subunits; this complex drives branch migration. In the full resolvosome a probable DNA-RuvA(4)-RuvB(12)-RuvC(2) complex forms which resolves the HJ.

The protein localises to the cytoplasm. Functionally, the RuvA-RuvB-RuvC complex processes Holliday junction (HJ) DNA during genetic recombination and DNA repair, while the RuvA-RuvB complex plays an important role in the rescue of blocked DNA replication forks via replication fork reversal (RFR). RuvA specifically binds to HJ cruciform DNA, conferring on it an open structure. The RuvB hexamer acts as an ATP-dependent pump, pulling dsDNA into and through the RuvAB complex. HJ branch migration allows RuvC to scan DNA until it finds its consensus sequence, where it cleaves and resolves the cruciform DNA. The sequence is that of Holliday junction branch migration complex subunit RuvA from Bifidobacterium animalis subsp. lactis (strain AD011).